A 533-amino-acid polypeptide reads, in one-letter code: Yeast-form wall Protein 1 (533 aa).

Positions 1–21 (MKVSTIFAAASALFAATTTLA) are cleaved as a signal peptide. Asn-115 is a glycosylation site (N-linked (GlcNAc...) asparagine). 2 disordered regions span residues 161 to 219 (YVPG…GEST) and 418 to 451 (PTKG…AHAS). Composition is skewed to low complexity over residues 163 to 214 (PGSS…ATGA) and 427 to 451 (PGSP…AHAS). Gly-511 carries the GPI-anchor amidated glycine lipid modification. Positions 512 to 533 (AAAASAGASVLALALIPLAYFI) are cleaved as a propeptide — removed in mature form.

Belongs to the flocculin family. In terms of processing, the GPI-anchor is attached to the protein in the endoplasmic reticulum and serves to target the protein to the cell surface. There, the glucosamine-inositol phospholipid moiety is cleaved off and the GPI-modified mannoprotein is covalently attached via its lipidless GPI glycan remnant to the 1,6-beta-glucan of the outer cell wall layer. Cleaved by SAP9 and SAP10, which leads to its release from the cell wall. Post-translationally, N-glycosylated.

It is found in the secreted. Its subcellular location is the cell wall. The protein localises to the membrane. Cell wall protein which plays an anti-adhesive role and promotes dispersal of yeast forms, which allows the organism to seek new sites for colonization. This Candida albicans (strain SC5314 / ATCC MYA-2876) (Yeast) protein is Yeast-form wall Protein 1 (YWP1).